The sequence spans 462 residues: Cathepsin F (462 aa).

Positions 1-19 (MAPLLQLLWLLTLLSTVAL) are cleaved as a signal peptide. Residues 20–248 (SPVPAKPWAD…MSPAKSINDL (229 aa)) constitute a propeptide, activation peptide. 3 N-linked (GlcNAc...) asparagine glycosylation sites follow: asparagine 35, asparagine 138, and asparagine 173. Disulfide bonds link cysteine 270-cysteine 311 and cysteine 304-cysteine 344. Cysteine 273 is an active-site residue. 2 N-linked (GlcNAc...) asparagine glycosylation sites follow: asparagine 345 and asparagine 356. Cysteines 402 and 450 form a disulfide. Histidine 409 is a catalytic residue. Residue asparagine 418 is glycosylated (N-linked (GlcNAc...) asparagine). Residue asparagine 429 is part of the active site.

This sequence belongs to the peptidase C1 family.

The protein resides in the lysosome. The catalysed reaction is The recombinant enzyme cleaves synthetic substrates with Phe and Leu (better than Val) in P2, with high specificity constant (kcat/Km) comparable to that of cathepsin L.. Thiol protease which is believed to participate in intracellular degradation and turnover of proteins. Has also been implicated in tumor invasion and metastasis. The chain is Cathepsin F (Ctsf) from Mus musculus (Mouse).